A 425-amino-acid polypeptide reads, in one-letter code: Serine--tRNA ligase (425 aa).

Position 230–232 (230–232) interacts with L-serine; it reads TAE. 261–263 serves as a coordination point for ATP; the sequence is RSE. Glu-284 contributes to the L-serine binding site. 348–351 is a binding site for ATP; the sequence is EISS. Residue Ser-384 coordinates L-serine.

This sequence belongs to the class-II aminoacyl-tRNA synthetase family. Type-1 seryl-tRNA synthetase subfamily. In terms of assembly, homodimer. The tRNA molecule binds across the dimer.

Its subcellular location is the cytoplasm. It carries out the reaction tRNA(Ser) + L-serine + ATP = L-seryl-tRNA(Ser) + AMP + diphosphate + H(+). The catalysed reaction is tRNA(Sec) + L-serine + ATP = L-seryl-tRNA(Sec) + AMP + diphosphate + H(+). It participates in aminoacyl-tRNA biosynthesis; selenocysteinyl-tRNA(Sec) biosynthesis; L-seryl-tRNA(Sec) from L-serine and tRNA(Sec): step 1/1. In terms of biological role, catalyzes the attachment of serine to tRNA(Ser). Is also able to aminoacylate tRNA(Sec) with serine, to form the misacylated tRNA L-seryl-tRNA(Sec), which will be further converted into selenocysteinyl-tRNA(Sec). This Streptococcus agalactiae serotype Ia (strain ATCC 27591 / A909 / CDC SS700) protein is Serine--tRNA ligase.